Reading from the N-terminus, the 21-residue chain is Granule-bound starch synthase 1 (21 aa).

Belongs to the glycosyltransferase 1 family. Bacterial/plant glycogen synthase subfamily.

Its subcellular location is the plastid. The protein resides in the chloroplast. It localises to the amyloplast. It carries out the reaction an NDP-alpha-D-glucose + [(1-&gt;4)-alpha-D-glucosyl](n) = [(1-&gt;4)-alpha-D-glucosyl](n+1) + a ribonucleoside 5'-diphosphate + H(+). The protein operates within glycan biosynthesis; starch biosynthesis. This chain is Granule-bound starch synthase 1, found in Secale cereale (Rye).